We begin with the raw amino-acid sequence, 139 residues long: Probable cytochrome b5 (139 aa).

A Cytochrome b5 heme-binding domain is found at 2–78 (SAEFTYQDVA…LEPLLVGTLK (77 aa)). Heme is bound by residues His37 and His61. The helical transmembrane segment at 105 to 125 (GLGIGLYAVLVLGGLAGFAAY) threads the bilayer.

It belongs to the cytochrome b5 family.

It localises to the endoplasmic reticulum membrane. Its subcellular location is the microsome membrane. Its function is as follows. Membrane bound hemoprotein which function as an electron carrier for several membrane bound oxygenases. This Neurospora crassa (strain ATCC 24698 / 74-OR23-1A / CBS 708.71 / DSM 1257 / FGSC 987) protein is Probable cytochrome b5.